The primary structure comprises 622 residues: DNA-directed RNA polymerase subunit gamma (622 aa).

4 residues coordinate Zn(2+): Cys-70, Cys-72, Cys-85, and Cys-88. 3 residues coordinate Mg(2+): Asp-466, Asp-468, and Asp-470.

This sequence belongs to the RNA polymerase beta' chain family. RpoC1 subfamily. As to quaternary structure, in cyanobacteria the RNAP catalytic core is composed of 2 alpha, 1 beta, 1 beta', 1 gamma and 1 omega subunit. When a sigma factor is associated with the core the holoenzyme is formed, which can initiate transcription. It depends on Mg(2+) as a cofactor. Zn(2+) is required as a cofactor.

It carries out the reaction RNA(n) + a ribonucleoside 5'-triphosphate = RNA(n+1) + diphosphate. In terms of biological role, DNA-dependent RNA polymerase catalyzes the transcription of DNA into RNA using the four ribonucleoside triphosphates as substrates. The protein is DNA-directed RNA polymerase subunit gamma of Thermosynechococcus vestitus (strain NIES-2133 / IAM M-273 / BP-1).